The primary structure comprises 726 residues: Serine/threonine-protein kinase PKH3 (726 aa).

Residues 10–271 enclose the Protein kinase domain; the sequence is FLFREELGHG…LEQIKKHKWF (262 aa). ATP contacts are provided by residues 16 to 24 and Lys39; that span reads LGHGSYSTV. Residue Asp136 is the Proton acceptor of the active site. The interval 629 to 679 is disordered; it reads QDIPLPSPAKSSSNSGVSEPISKIPPRQLVSASEQSHKAKSEAHTKKANSY. Over residues 663–673 the composition is skewed to basic and acidic residues; that stretch reads QSHKAKSEAHT.

Belongs to the protein kinase superfamily. Ser/Thr protein kinase family.

It carries out the reaction L-seryl-[protein] + ATP = O-phospho-L-seryl-[protein] + ADP + H(+). It catalyses the reaction L-threonyl-[protein] + ATP = O-phospho-L-threonyl-[protein] + ADP + H(+). Its function is as follows. Serine/threonine-protein kinase. The protein is Serine/threonine-protein kinase PKH3 (PKH3) of Eremothecium gossypii (strain ATCC 10895 / CBS 109.51 / FGSC 9923 / NRRL Y-1056) (Yeast).